A 398-amino-acid chain; its full sequence is MASTSSTSTDGHLNIRPMVHGSDKKLNFGAYITGLDLNNASDAEVDQLREAILRHKIVVIKGQQAEKPDKNWEMIKKLDPMHHMITQEEFGQLFHPTGEGLIAMLKLATVPTTEHGHIHLMGKGYQGDDHYGLKKLNLGEAFAGNYYSKPLAEEDFRAGVTRFQSWHMDGPLYKVHPPYISSLRFIQLPDGEQTVEWADGSGLSLKTKPGRTAFFSTSQLYDMLTDEERAMVDNSAVEYMYYPYEWIRGCRGNPNGLNVADEGREKPLDAMEEIARDERWTKTYPMVWFNELTKEKSLQVQPNCVRRLLIRRSADQKEPEIIEGPERVREFMNKLQQRIVRPEYVYVGPEEEGDHVFWYNWGMMHSKIDYPIAYGPRIVHQGWIPSHRVPRGPTAVAH.

Fe cation contacts are provided by His167 and Asp169. Position 212 (Thr212) interacts with 2-oxoglutarate. His365 serves as a coordination point for Fe cation. Arg377 is a 2-oxoglutarate binding site.

The protein belongs to the TfdA dioxygenase family. Fe(2+) serves as cofactor.

It functions in the pathway mycotoxin biosynthesis. Alpha-ketoglutarate dependent dioxygenase; part of the gene cluster that mediates the biosynthesis of the diterpene glucoside brassicicene C. In the first step of the brassicicene C biosynthesis, the bifunctional diterpene synthase bsc8 that possesses both prenyl transferase and terpene cyclase activity, converts isopentenyl diphosphate and dimethylallyl diphosphate into geranylgeranyl diphosphate (GGDP) that is further converted into fusicocca-2,10(14)-diene, the first precursor for brassicicene C. Fusicocca-2,10(14)-diene is then substrate of cytochrome P450 monooxygenase bsc1 for hydroxylation at the C-8 position. Oxidation at C-16 position to aldehyde is then catalyzed by the cytochrome P450 monooyxygenase bsc7, yielding fusicocca-2,10(14)-diene-8-beta,16-diol. Follows the isomerization of the double bond and reduction of aldehyde to alcohol catalyzed by the short-chain dehydrogenase/reductase bsc3 to yield the diol compound fusicocca-1,10(14)-diene-8 beta,16-diol. The next step is the oxidation at the C-3 position of fusicocca-2,10(14)-diene-8-beta,16-diol catalyzed by the alpha-ketoglutarate dependent dioxygenase bsc9, to produce a triol compound. Methylation of the hydroxy group at position 16 is performed by the methyltransferase bsc6. 16-O-methylation is followed by oxidation at the C-13 position to ketone and an alkyl shift of the methyl group leads to brassicicene C. Although the probable acetyltransferase bsc4 is included in the gene cluster, no acetylation reactions are necessary for brassicicene C biosynthesis. However, the fact that brassicicene E, which is a structurally related compound having an acetoxy group at position 12, was previously isolated from another strain of A.brassicicola suggests that the ATCC 96836 strain might also produce a small amount of brassicicene E. In Alternaria brassicicola (Dark leaf spot agent), this protein is Alpha-ketoglutarate-dependent dioxygenase bsc9.